A 264-amino-acid polypeptide reads, in one-letter code: Ion-translocating oxidoreductase complex subunit B (264 aa).

Residues Leu5–Ile25 traverse the membrane as a helical segment. The 4Fe-4S domain occupies Asp33–Gln92. Cys50, Cys53, Cys58, Cys75, Cys138, Cys142, Cys148, Cys152, Cys172, Cys175, Cys178, Cys182, Cys217, Cys220, Cys223, Cys227, Cys246, Cys249, Cys252, and Cys256 together coordinate [4Fe-4S] cluster. 4 consecutive 4Fe-4S ferredoxin-type domains span residues Val127–Asp162, Gly163–Asp192, Lys207–Glu236, and Phe237–Arg264.

The protein belongs to the 4Fe4S bacterial-type ferredoxin family. RnfB subfamily. The Rnf complex is probably composed of eight subunits, including RnfA, RnfB, RnfC, RnfD, RnfE and RnfG. [4Fe-4S] cluster serves as cofactor.

The protein localises to the cell membrane. In terms of biological role, part of a membrane-bound complex that couples electron transfer with translocation of ions across the membrane. Catalyzes Na(+) transport, most probably coupled to electron transfer from reduced ferredoxin to methanophenazine and heterodisulfide reductase. Involved in heterodisulfide reduction during methanogenesis from acetate. The chain is Ion-translocating oxidoreductase complex subunit B from Methanosarcina acetivorans (strain ATCC 35395 / DSM 2834 / JCM 12185 / C2A).